Consider the following 418-residue polypeptide: UDP-N-acetylglucosamine 1-carboxyvinyltransferase (418 aa).

Lysine 22 to asparagine 23 is a phosphoenolpyruvate binding site. A UDP-N-acetyl-alpha-D-glucosamine-binding site is contributed by arginine 92. Catalysis depends on cysteine 116, which acts as the Proton donor. Residue cysteine 116 is modified to 2-(S-cysteinyl)pyruvic acid O-phosphothioketal. UDP-N-acetyl-alpha-D-glucosamine is bound by residues arginine 121 to leucine 125, aspartate 305, and leucine 327.

This sequence belongs to the EPSP synthase family. MurA subfamily.

It localises to the cytoplasm. It carries out the reaction phosphoenolpyruvate + UDP-N-acetyl-alpha-D-glucosamine = UDP-N-acetyl-3-O-(1-carboxyvinyl)-alpha-D-glucosamine + phosphate. It participates in cell wall biogenesis; peptidoglycan biosynthesis. Cell wall formation. Adds enolpyruvyl to UDP-N-acetylglucosamine. The chain is UDP-N-acetylglucosamine 1-carboxyvinyltransferase from Campylobacter jejuni subsp. doylei (strain ATCC BAA-1458 / RM4099 / 269.97).